The primary structure comprises 457 residues: Cysteine--tRNA ligase (457 aa).

A Zn(2+)-binding site is contributed by C27. Positions 29–39 (ITPQSEPHIGH) match the 'HIGH' region motif. Residues C207, H232, and E236 each contribute to the Zn(2+) site. Positions 265–269 (KMSKS) match the 'KMSKS' region motif. Position 268 (K268) interacts with ATP.

Belongs to the class-I aminoacyl-tRNA synthetase family. Monomer. Zn(2+) is required as a cofactor.

The protein localises to the cytoplasm. The enzyme catalyses tRNA(Cys) + L-cysteine + ATP = L-cysteinyl-tRNA(Cys) + AMP + diphosphate. The protein is Cysteine--tRNA ligase of Dehalococcoides mccartyi (strain ATCC BAA-2100 / JCM 16839 / KCTC 5957 / BAV1).